We begin with the raw amino-acid sequence, 196 residues long: Pyridoxal 5'-phosphate synthase subunit PdxT (196 aa).

Position 52–54 (52–54 (GES)) interacts with L-glutamine. Residue cysteine 84 is the Nucleophile of the active site. L-glutamine-binding positions include arginine 113 and 141 to 142 (IR). Active-site charge relay system residues include histidine 178 and glutamate 180.

Belongs to the glutaminase PdxT/SNO family. As to quaternary structure, in the presence of PdxS, forms a dodecamer of heterodimers. Only shows activity in the heterodimer.

It carries out the reaction aldehydo-D-ribose 5-phosphate + D-glyceraldehyde 3-phosphate + L-glutamine = pyridoxal 5'-phosphate + L-glutamate + phosphate + 3 H2O + H(+). It catalyses the reaction L-glutamine + H2O = L-glutamate + NH4(+). It participates in cofactor biosynthesis; pyridoxal 5'-phosphate biosynthesis. Its function is as follows. Catalyzes the hydrolysis of glutamine to glutamate and ammonia as part of the biosynthesis of pyridoxal 5'-phosphate. The resulting ammonia molecule is channeled to the active site of PdxS. In Pyrococcus abyssi (strain GE5 / Orsay), this protein is Pyridoxal 5'-phosphate synthase subunit PdxT.